We begin with the raw amino-acid sequence, 223 residues long: Pleckstrin homology domain-containing family B member 1 (223 aa).

A PH domain is found at 2–109; that stretch reads ALVRGGWLWR…WKTALMEANS (108 aa).

As to quaternary structure, homodimer. Interacts (via PH domain) with MYO1C. Interacts (via PH domain) with MYO7A. Binds transducins. Highly expressed in photoreceptor cells, oligodendrocytes and throughout the myelinated parts of the central nervous system. Detected in brain, liver, kidney, spleen and trachea.

It is found in the membrane. Its subcellular location is the cytoplasm. This chain is Pleckstrin homology domain-containing family B member 1 (Plekhb1), found in Rattus norvegicus (Rat).